The chain runs to 382 residues: D-galactonate dehydratase (382 aa).

Mg(2+) is bound at residue D183. H185 (proton donor) is an active-site residue. Residues E209 and E235 each coordinate Mg(2+). H285 (proton acceptor) is an active-site residue.

This sequence belongs to the mandelate racemase/muconate lactonizing enzyme family. GalD subfamily. Requires Mg(2+) as cofactor.

It catalyses the reaction D-galactonate = 2-dehydro-3-deoxy-D-galactonate + H2O. The protein operates within carbohydrate acid metabolism; D-galactonate degradation; D-glyceraldehyde 3-phosphate and pyruvate from D-galactonate: step 1/3. In terms of biological role, catalyzes the dehydration of D-galactonate to 2-keto-3-deoxy-D-galactonate. This is D-galactonate dehydratase from Pectobacterium atrosepticum (strain SCRI 1043 / ATCC BAA-672) (Erwinia carotovora subsp. atroseptica).